A 465-amino-acid polypeptide reads, in one-letter code: Asparagine--tRNA ligase (465 aa).

This sequence belongs to the class-II aminoacyl-tRNA synthetase family. In terms of assembly, homodimer.

It localises to the cytoplasm. It catalyses the reaction tRNA(Asn) + L-asparagine + ATP = L-asparaginyl-tRNA(Asn) + AMP + diphosphate + H(+). The sequence is that of Asparagine--tRNA ligase from Pseudoalteromonas translucida (strain TAC 125).